Here is a 67-residue protein sequence, read N- to C-terminus: Sec-independent protein translocase protein TatA (67 aa).

Residues 1–21 form a helical membrane-spanning segment; that stretch reads MFGLGGQELVLILLIVLLLFG.

This sequence belongs to the TatA/E family. Forms a complex with TatC.

The protein resides in the cell inner membrane. Part of the twin-arginine translocation (Tat) system that transports large folded proteins containing a characteristic twin-arginine motif in their signal peptide across membranes. TatA could form the protein-conducting channel of the Tat system. This is Sec-independent protein translocase protein TatA from Chlorobaculum tepidum (strain ATCC 49652 / DSM 12025 / NBRC 103806 / TLS) (Chlorobium tepidum).